We begin with the raw amino-acid sequence, 113 residues long: Large ribosomal subunit protein bL19 (113 aa).

It belongs to the bacterial ribosomal protein bL19 family.

Its function is as follows. This protein is located at the 30S-50S ribosomal subunit interface and may play a role in the structure and function of the aminoacyl-tRNA binding site. In Mycolicibacterium vanbaalenii (strain DSM 7251 / JCM 13017 / BCRC 16820 / KCTC 9966 / NRRL B-24157 / PYR-1) (Mycobacterium vanbaalenii), this protein is Large ribosomal subunit protein bL19.